A 335-amino-acid polypeptide reads, in one-letter code: Tetraacyldisaccharide 4'-kinase (335 aa).

ATP is bound at residue 58 to 65 (TVGGNGKT).

Belongs to the LpxK family.

It carries out the reaction a lipid A disaccharide + ATP = a lipid IVA + ADP + H(+). Its pathway is glycolipid biosynthesis; lipid IV(A) biosynthesis; lipid IV(A) from (3R)-3-hydroxytetradecanoyl-[acyl-carrier-protein] and UDP-N-acetyl-alpha-D-glucosamine: step 6/6. In terms of biological role, transfers the gamma-phosphate of ATP to the 4'-position of a tetraacyldisaccharide 1-phosphate intermediate (termed DS-1-P) to form tetraacyldisaccharide 1,4'-bis-phosphate (lipid IVA). This is Tetraacyldisaccharide 4'-kinase from Dichelobacter nodosus (strain VCS1703A).